An 80-amino-acid polypeptide reads, in one-letter code: Defensin-like protein CAL1 (80 aa).

An N-terminal signal peptide occupies residues 1–31; it reads MAPSRRMVASAFLLLAILVATEMGTTKVAEA. Disulfide bonds link C34–C80, C45–C65, C51–C74, and C55–C76.

This sequence belongs to the DEFL family. As to expression, expressed preferentially in root exodermis and xylem parenchyma cells in vasculature of root and flag leaf sheath.

It is found in the secreted. The protein resides in the extracellular space. Its function is as follows. Plant defensin-like protein involved in accumulation of cadmium (Cd) in rice leaves. Mediates Cd efflux from cytosol into extracellular spaces via chelation. This drives Cd secretion from xylem parenchyma cells into the xylem vessels, hence lowering Cd levels in cytosol meanwhile promoting Cd translocation from roots to shoots. In Oryza sativa subsp. japonica (Rice), this protein is Defensin-like protein CAL1.